Reading from the N-terminus, the 516-residue chain is Probable serine/threonine-protein kinase WNK3 (516 aa).

The region spanning 22 to 280 is the Protein kinase domain; the sequence is GRYKEVLGKG…AKELLDDPFL (259 aa). Residues 102–105 and Lys-152 each bind ATP; that span reads TEVF. Residue Asp-169 is the Proton acceptor of the active site. Positions 426-451 are disordered; that stretch reads SSPKAGAGDSRSPFAPRSNSKLSSAQ. The span at 442–451 shows a compositional bias: polar residues; the sequence is RSNSKLSSAQ. A coiled-coil region spans residues 457-490; it reads EVGVIVEKLESLLRKQREEIEEMQRDQERIVTEF.

The protein belongs to the protein kinase superfamily. Ser/Thr protein kinase family. WNK subfamily.

It catalyses the reaction L-seryl-[protein] + ATP = O-phospho-L-seryl-[protein] + ADP + H(+). The enzyme catalyses L-threonyl-[protein] + ATP = O-phospho-L-threonyl-[protein] + ADP + H(+). In terms of biological role, may regulate flowering time by modulating the photoperiod pathway. This Arabidopsis thaliana (Mouse-ear cress) protein is Probable serine/threonine-protein kinase WNK3 (WNK3).